Reading from the N-terminus, the 1019-residue chain is Collagen alpha-1(VI) chain (1019 aa).

The signal sequence occupies residues 1 to 19 (MGLHDSFLALLLLLGGAWA). In terms of domain architecture, VWFA 1 spans 37 to 233 (DLFFVLDTSE…LDVEETINNI (197 aa)). A glycan (N-linked (GlcNAc...) asparagine) is linked at asparagine 212. The segment at 248 to 588 (FECHPPRGPP…GPPGPVGPPG (341 aa)) is disordered. A compositionally biased stretch (pro residues) spans 253–262 (PRGPPGPPGD). Basic and acidic residues-rich tracts occupy residues 299–332 (KGDKGSRGEKGSRGAKGAKGEKGKRGIDGIDGMK) and 370–380 (GKGEPGEDGKP). The span at 427-436 (ERGPPGSPGD) shows a compositional bias: low complexity. The short motif at 476 to 478 (RGD) is the Cell attachment site element. The N-linked (GlcNAc...) asparagine glycan is linked to asparagine 514. The Cell attachment site motif lies at 529 to 531 (RGD). Asparagine 535 carries N-linked (GlcNAc...) asparagine glycosylation. Residues 577 to 588 (RPGPPGPVGPPG) show a composition bias toward pro residues. VWFA domains follow at residues 613-800 (DLLF…LQNI) and 824-1012 (DIML…YQTV). 2 N-linked (GlcNAc...) asparagine glycosylation sites follow: asparagine 799 and asparagine 887.

Belongs to the type VI collagen family. In terms of assembly, trimers composed of three different chains: alpha 1(VI), alpha 2(VI), and alpha 3(VI). In terms of processing, prolines at the third position of the tripeptide repeating unit (G-X-Y) are hydroxylated in some or all of the chains.

It is found in the secreted. It localises to the extracellular space. Its subcellular location is the extracellular matrix. Functionally, collagen VI acts as a cell-binding protein. In Gallus gallus (Chicken), this protein is Collagen alpha-1(VI) chain (COL6A1).